Consider the following 381-residue polypeptide: Endolytic peptidoglycan transglycosylase RlpA (381 aa).

A signal peptide spans 1-19 (MRKQLPVICVAAGIVLLAA). Cys-20 is lipidated: N-palmitoyl cysteine. The S-diacylglycerol cysteine moiety is linked to residue Cys-20. Positions 196–274 (LPPRPDLSGG…QPAPVSAPVA (79 aa)) are disordered. Low complexity predominate over residues 208 to 218 (SASSAPAQPQG). The SPOR domain maps to 304–380 (AAASGRFVVQ…AQLQSFIASA (77 aa)).

This sequence belongs to the RlpA family.

It is found in the cell membrane. Lytic transglycosylase with a strong preference for naked glycan strands that lack stem peptides. This chain is Endolytic peptidoglycan transglycosylase RlpA, found in Salmonella typhimurium (strain LT2 / SGSC1412 / ATCC 700720).